We begin with the raw amino-acid sequence, 449 residues long: Exodeoxyribonuclease 7 large subunit (449 aa).

This sequence belongs to the XseA family. Heterooligomer composed of large and small subunits.

The protein resides in the cytoplasm. It catalyses the reaction Exonucleolytic cleavage in either 5'- to 3'- or 3'- to 5'-direction to yield nucleoside 5'-phosphates.. Bidirectionally degrades single-stranded DNA into large acid-insoluble oligonucleotides, which are then degraded further into small acid-soluble oligonucleotides. This Salmonella dublin (strain CT_02021853) protein is Exodeoxyribonuclease 7 large subunit.